The sequence spans 208 residues: Large ribosomal subunit protein uL3 (208 aa).

The segment at 123–147 is disordered; sequence RHGQSRGPMAHGSRYHRRPGSMGPV.

The protein belongs to the universal ribosomal protein uL3 family. In terms of assembly, part of the 50S ribosomal subunit. Forms a cluster with proteins L14 and L19.

Its function is as follows. One of the primary rRNA binding proteins, it binds directly near the 3'-end of the 23S rRNA, where it nucleates assembly of the 50S subunit. This Streptococcus sanguinis (strain SK36) protein is Large ribosomal subunit protein uL3.